The sequence spans 231 residues: Ion-translocating oxidoreductase complex subunit E (231 aa).

A run of 6 helical transmembrane segments spans residues 18 to 38, 39 to 59, 69 to 89, 93 to 113, 127 to 147, and 182 to 202; these read GLVQLLGLCPLLAVTATLTNA, LGLGLATMLVLIGSNILVSLV, IPVFVMIIAALVTSVQLFINA, GLYLSLGIFLPLIVTNCVIIG, STFDGLMMGLGFTLVLCVLGA, and TFLLAMLPPGAFIGMGLLIAL.

Belongs to the NqrDE/RnfAE family. The complex is composed of six subunits: RnfA, RnfB, RnfC, RnfD, RnfE and RnfG.

It is found in the cell inner membrane. Its function is as follows. Part of a membrane-bound complex that couples electron transfer with translocation of ions across the membrane. This is Ion-translocating oxidoreductase complex subunit E from Shewanella piezotolerans (strain WP3 / JCM 13877).